The primary structure comprises 89 residues: Small ribosomal subunit protein bS16 (89 aa).

This sequence belongs to the bacterial ribosomal protein bS16 family.

This Nitrosomonas europaea (strain ATCC 19718 / CIP 103999 / KCTC 2705 / NBRC 14298) protein is Small ribosomal subunit protein bS16.